The chain runs to 579 residues: MLQMGKAREPNFLILFFFGLILAFGISSEGSQIRHYKWEVEYMFWAPDCNENIVMGINGQFPGPTIRANAGDTVVVELINKLHTEGVVIHWHGILQRGTPWADGTASISQCAINPGETFFYNFTVDNPGTFFYHGHLGMQRSAGLYGSLIVDPPQGKKEPFHYDGEINLLLSDWWHQSIHKQEVGLSSKPIRWIGEPQTILLNGRGQFDCSIAAKYDSNLEPCKLKGSEPCAPYIFHVMPKKTYRIRIASTTALAALNFAIGNHPLLVVEADGNYVQPFYTSDIDIYSGESYSVLITTDQNPSENYWVSVGTRGRHPNTPPGLTLLNYLPNSVSKLPTSPPPETPAWDDFDRSKNFTYRITAAMGSPKPPVKSNRRIFLLNTQNVINGYVKWAINDVSLALPPTPYLGAMKFNLLHAFDQNPPPEVFPEDYDIDTPPTNEKTKIGNGVYQFKIGEIVDVILQNANMMKENLSEIHPWHLHGHDFWVLGYGDGKFTAEEESSLNLKNPPLRNTVVIFPYGWTAIRFVADNPGVWAFHCHIEPHLHMGMGVVFAEGVEKVGRIPTKALACGGTAKSLINNP.

Positions 1–30 (MLQMGKAREPNFLILFFFGLILAFGISSEG) are cleaved as a signal peptide. Plastocyanin-like domains lie at 33–152 (IRHY…LIVD) and 164–330 (DGEI…NYLP). Cystine bridges form between cysteine 49-cysteine 231, cysteine 111-cysteine 568, and cysteine 210-cysteine 223. The Cu cation site is built by histidine 90 and histidine 92. A glycan (N-linked (GlcNAc...) asparagine) is linked at asparagine 122. The Cu cation site is built by histidine 134 and histidine 136. N-linked (GlcNAc...) asparagine glycans are attached at residues asparagine 355 and asparagine 470. Residues 374 to 553 (NRRIFLLNTQ…HMGMGVVFAE (180 aa)) form the Plastocyanin-like 3 domain. Residues histidine 475, histidine 478, histidine 480, histidine 536, cysteine 537, histidine 538, histidine 542, and methionine 547 each contribute to the Cu cation site.

This sequence belongs to the multicopper oxidase family. In terms of assembly, dimer. Requires Cu cation as cofactor.

The protein localises to the secreted. The catalysed reaction is 4 L-ascorbate + O2 = 4 monodehydro-L-ascorbate radical + 2 H2O. May be involved in a redox system involving ascorbic acid. The protein is L-ascorbate oxidase (AAO) of Cucurbita maxima (Pumpkin).